The primary structure comprises 272 residues: Undecaprenyl-diphosphatase (272 aa).

The next 8 helical transmembrane spans lie at 5-25 (YSLF…FLPV), 45-65 (AKTF…VVFW), 88-108 (HLTL…GLAF), 114-134 (ALFD…LLLA), 153-172 (YRQA…PGFS), 189-209 (YAAS…ASGL), 221-241 (GDLP…LIAI), and 251-271 (ISFV…YWVF).

Belongs to the UppP family.

It localises to the cell inner membrane. The enzyme catalyses di-trans,octa-cis-undecaprenyl diphosphate + H2O = di-trans,octa-cis-undecaprenyl phosphate + phosphate + H(+). Its function is as follows. Catalyzes the dephosphorylation of undecaprenyl diphosphate (UPP). Confers resistance to bacitracin. The sequence is that of Undecaprenyl-diphosphatase from Yersinia pseudotuberculosis serotype IB (strain PB1/+).